A 350-amino-acid polypeptide reads, in one-letter code: MAMRQTPLTCSGHTRPVVDLAFSGITPYGYFLISACKDGKPMLRQGDTGDWIGTFLGHKGAVWGATLNKDATKAATAAADFTAKVWDAVSGDELMTLAHKHIVKTVDFTQDSNYLLTGGQDKLLRIYDLNKPEAEPKEISGHTSGIKKALWCSDDKQILSADDKTVRLWDHATMTEVKSLNFNMSVSSMEYIPEGEILVITYGRSIAFHSAVSLEPIKSFEAPATINSASLHPEKEFLVAGGEDFKLYKYDYNSGEELESYKGHFGPIHCVRFSPDGELYASGSEDGTLRLWQTVVGKTYGLWKCVLPEEDSGELAKPKIGFPETAEEELEEIASENSDSIYSSTPEVKA.

7 WD repeats span residues 12-56 (GHTR…GTFL), 57-96 (GHKG…ELMT), 98-137 (AHKH…AEPK), 141-179 (GHTS…EVKS), 180-212 (LNFN…HSAV), 221-262 (EAPA…ESYK), and 263-302 (GHFG…TYGL). 3 positions are modified to phosphoserine: serine 312, serine 335, and serine 338. A disordered region spans residues 326 to 350 (AEEELEEIASENSDSIYSSTPEVKA). Over residues 337–350 (NSDSIYSSTPEVKA) the composition is skewed to polar residues. Tyrosine 342 carries the post-translational modification Phosphotyrosine.

Belongs to the WD repeat STRAP family. Part of the core SMN complex that contains SMN1, GEMIN2/SIP1, DDX20/GEMIN3, GEMIN4, GEMIN5, GEMIN6, GEMIN7, GEMIN8 and STRAP/UNRIP. Part of the SMN-Sm complex that contains SMN1, GEMIN2/SIP1, DDX20/GEMIN3, GEMIN4, GEMIN5, GEMIN6, GEMIN7, GEMIN8, STRAP/UNRIP and the Sm proteins SNRPB, SNRPD1, SNRPD2, SNRPD3, SNRPE, SNRPF and SNRPG. Interacts directly with GEMIN6 and GEMIN7. Associates with the SMN complex in the cytoplasm but not in the nucleus. Also interacts with CSDE1/UNR and MAWBP. Interacts with PDPK1. Interacts with TRIM48.

Its subcellular location is the cytoplasm. It localises to the nucleus. Its function is as follows. The SMN complex catalyzes the assembly of small nuclear ribonucleoproteins (snRNPs), the building blocks of the spliceosome, and thereby plays an important role in the splicing of cellular pre-mRNAs. Most spliceosomal snRNPs contain a common set of Sm proteins SNRPB, SNRPD1, SNRPD2, SNRPD3, SNRPE, SNRPF and SNRPG that assemble in a heptameric protein ring on the Sm site of the small nuclear RNA to form the core snRNP (Sm core). In the cytosol, the Sm proteins SNRPD1, SNRPD2, SNRPE, SNRPF and SNRPG are trapped in an inactive 6S pICln-Sm complex by the chaperone CLNS1A that controls the assembly of the core snRNP. To assemble core snRNPs, the SMN complex accepts the trapped 5Sm proteins from CLNS1A forming an intermediate. Binding of snRNA inside 5Sm triggers eviction of the SMN complex, thereby allowing binding of SNRPD3 and SNRPB to complete assembly of the core snRNP. STRAP plays a role in the cellular distribution of the SMN complex. Negatively regulates TGF-beta signaling but positively regulates the PDPK1 kinase activity by enhancing its autophosphorylation and by significantly reducing the association of PDPK1 with 14-3-3 protein. The polypeptide is Serine-threonine kinase receptor-associated protein (Strap) (Mus musculus (Mouse)).